A 196-amino-acid chain; its full sequence is MEPQLILGSSSPRRKSILQYFRIPFTCISPSFEERSVPYQGDPVAYSQELAVGKAESIVQDHNPEGVILTADTVVIYKGKVFNKPGSHDEAIEMLKTLSGQTHSIITSVALLQQKKLMVGQETTQVTFNKLPEEYLGRYVEAFSTLDKCGGYSTQEGGGLIIHNIQGCAYNVQGLPIRTLYHLLLEFDINLWDYLV.

D72 serves as the catalytic Proton acceptor.

The protein belongs to the Maf family. YhdE subfamily. A divalent metal cation serves as cofactor.

The protein localises to the cytoplasm. It catalyses the reaction dTTP + H2O = dTMP + diphosphate + H(+). It carries out the reaction UTP + H2O = UMP + diphosphate + H(+). Its function is as follows. Nucleoside triphosphate pyrophosphatase that hydrolyzes dTTP and UTP. May have a dual role in cell division arrest and in preventing the incorporation of modified nucleotides into cellular nucleic acids. The protein is dTTP/UTP pyrophosphatase of Chlamydia felis (strain Fe/C-56) (Chlamydophila felis).